A 389-amino-acid chain; its full sequence is Chorismate synthase (389 aa).

Residues R41 and R47 each coordinate NADP(+). Residues R129–S131, N247–A248, G291, K306–T310, and R332 each bind FMN.

This sequence belongs to the chorismate synthase family. Homotetramer. It depends on FMNH2 as a cofactor.

It catalyses the reaction 5-O-(1-carboxyvinyl)-3-phosphoshikimate = chorismate + phosphate. It functions in the pathway metabolic intermediate biosynthesis; chorismate biosynthesis; chorismate from D-erythrose 4-phosphate and phosphoenolpyruvate: step 7/7. Functionally, catalyzes the anti-1,4-elimination of the C-3 phosphate and the C-6 proR hydrogen from 5-enolpyruvylshikimate-3-phosphate (EPSP) to yield chorismate, which is the branch point compound that serves as the starting substrate for the three terminal pathways of aromatic amino acid biosynthesis. This reaction introduces a second double bond into the aromatic ring system. This chain is Chorismate synthase, found in Rubrobacter xylanophilus (strain DSM 9941 / JCM 11954 / NBRC 16129 / PRD-1).